The sequence spans 222 residues: Germin-like protein subfamily 1 member 13 (222 aa).

A signal peptide spans 1-18 (MRVSKSLILITLSALVIS). Cys32 and Cys49 are joined by a disulfide. The Cupin type-1 domain maps to 63–214 (SGLNQAGSTN…AFQLDVNIVE (152 aa)). Asn78 carries an N-linked (GlcNAc...) asparagine glycan. His111, His113, Glu118, and His160 together coordinate Mn(2+).

The protein belongs to the germin family. As to quaternary structure, oligomer (believed to be a pentamer but probably hexamer).

The protein localises to the secreted. Its subcellular location is the extracellular space. It localises to the apoplast. May play a role in plant defense. Probably has no oxalate oxidase activity even if the active site is conserved. This chain is Germin-like protein subfamily 1 member 13 (GLP6), found in Arabidopsis thaliana (Mouse-ear cress).